A 429-amino-acid chain; its full sequence is GTPase Obg (429 aa).

Residues 1-158 enclose the Obg domain; that stretch reads MFVDQVKIYV…RNVQLELKVL (158 aa). Positions 124–145 are disordered; it reads RGNKRFATPANPAPELSENGEP. The OBG-type G domain maps to 159–329; it reads ADVGLVGFPS…LLLAIADKLE (171 aa). Residues 165 to 172, 190 to 194, 212 to 215, 282 to 285, and 310 to 312 contribute to the GTP site; these read GFPSVGKS, FTTIV, DLPG, NKMD, and SAV. Residues Ser-172 and Thr-192 each contribute to the Mg(2+) site. The OCT domain occupies 351 to 429; the sequence is KYIAEEPDFE…LLDYEFEFMD (79 aa).

Belongs to the TRAFAC class OBG-HflX-like GTPase superfamily. OBG GTPase family. Monomer. Requires Mg(2+) as cofactor.

It is found in the cytoplasm. Functionally, an essential GTPase which binds GTP, GDP and possibly (p)ppGpp with moderate affinity, with high nucleotide exchange rates and a fairly low GTP hydrolysis rate. Plays a role in control of the cell cycle, stress response, ribosome biogenesis and in those bacteria that undergo differentiation, in morphogenesis control. The polypeptide is GTPase Obg (Listeria welshimeri serovar 6b (strain ATCC 35897 / DSM 20650 / CCUG 15529 / CIP 8149 / NCTC 11857 / SLCC 5334 / V8)).